The chain runs to 2355 residues: Acetyl-CoA carboxylase 2 (2355 aa).

A Biotin carboxylation domain is found at 138–645 (PIHSILVATN…HTGWLDSRIA (508 aa)). In terms of domain architecture, ATP-grasp spans 291-485 (GRSLVTVPEE…AAQVAVGMGI (195 aa)). Residue 317-374 (CQVVGYPAMIKASWGGGGKGIRKVHNDDEVRALFKQVQGEVPGSPIFIMKVASQSRHL) participates in ATP binding. Residues Glu440, Glu454, and Asn456 each coordinate Mg(2+). Mn(2+) contacts are provided by Glu440, Glu454, and Asn456. Residue Arg458 is part of the active site. In terms of domain architecture, Biotinyl-binding spans 772-846 (LQNDHDPSKL…QAGELIAKLD (75 aa)). Lys813 is modified (N6-biotinyllysine). The residue at position 1133 (Thr1133) is a Phosphothreonine. Ser1293 is modified (phosphoserine). One can recognise a CoA carboxyltransferase N-terminal domain in the interval 1593–1932 (QYKPLNNLDR…YVGGPLPVLA (340 aa)). The tract at residues 1593-2251 (QYKPLNNLDR…ESSLVRNIRK (659 aa)) is carboxyltransferase. CoA is bound by residues Arg1841, Lys2142, and Arg2144. In terms of domain architecture, CoA carboxyltransferase C-terminal spans 1936-2251 (PPERTVEYIP…ESSLVRNIRK (316 aa)).

Homodimer. Biotin is required as a cofactor. It depends on Mg(2+) as a cofactor. Mn(2+) serves as cofactor. Widely expressed at low levels.

It localises to the cytoplasm. It is found in the cytosol. The catalysed reaction is hydrogencarbonate + acetyl-CoA + ATP = malonyl-CoA + ADP + phosphate + H(+). It carries out the reaction N(6)-biotinyl-L-lysyl-[protein] + hydrogencarbonate + ATP = N(6)-carboxybiotinyl-L-lysyl-[protein] + ADP + phosphate + H(+). The protein operates within lipid metabolism; malonyl-CoA biosynthesis; malonyl-CoA from acetyl-CoA: step 1/1. Functionally, multifunctional enzyme that catalyzes the carboxylation of acetyl-CoA, forming malonyl-CoA, which is used in the plastid for fatty acid synthesis and in the cytosol in various biosynthetic pathways including fatty acid elongation. The polypeptide is Acetyl-CoA carboxylase 2 (ACC2) (Arabidopsis thaliana (Mouse-ear cress)).